Consider the following 101-residue polypeptide: Small ribosomal subunit protein uS14 (101 aa).

It belongs to the universal ribosomal protein uS14 family. In terms of assembly, part of the 30S ribosomal subunit. Contacts proteins S3 and S10.

Its function is as follows. Binds 16S rRNA, required for the assembly of 30S particles and may also be responsible for determining the conformation of the 16S rRNA at the A site. The chain is Small ribosomal subunit protein uS14 from Paramagnetospirillum magneticum (strain ATCC 700264 / AMB-1) (Magnetospirillum magneticum).